We begin with the raw amino-acid sequence, 155 residues long: Cyanate hydratase (155 aa).

Catalysis depends on residues Arg-95, Glu-98, and Ser-121.

Belongs to the cyanase family.

The enzyme catalyses cyanate + hydrogencarbonate + 3 H(+) = NH4(+) + 2 CO2. In terms of biological role, catalyzes the reaction of cyanate with bicarbonate to produce ammonia and carbon dioxide. This chain is Cyanate hydratase, found in Pseudomonas syringae pv. syringae (strain B728a).